Here is a 98-residue protein sequence, read N- to C-terminus: Small proline-rich protein 2B (98 aa).

5 tandem repeats follow at residues 21-29 (PKCPEPCPP), 30-38 (PKCPEPCPP), 39-47 (PVCCEPCPP), 48-56 (PKCPEPCPP), and 57-65 (PVCCEPCPP). Residues 21 to 65 (PKCPEPCPPPKCPEPCPPPVCCEPCPPPKCPEPCPPPVCCEPCPP) are 5 X 9 AA approximate tandem repeats.

It belongs to the cornifin (SPRR) family. Expressed in uterus.

The protein resides in the cytoplasm. In terms of biological role, cross-linked envelope protein of keratinocytes. It is a keratinocyte protein that first appears in the cell cytosol, but ultimately becomes cross-linked to membrane proteins by transglutaminase. All that results in the formation of an insoluble envelope beneath the plasma membrane. The sequence is that of Small proline-rich protein 2B (Sprr2b) from Mus musculus (Mouse).